The following is a 658-amino-acid chain: MIPELPHAQLDWDDQGRPRSRVFDDVYFSSESGLDETRHVFIEQNRLGQRFAALADGERFVIGETGFGTGLNFLCAWQLFQQQAPTGARLHFVSVEKYPLSPADLQRALALWPELASFSAPLLEQYVAVHGGFQRIVLEGGRVILTLLIGDALEQLPQLDAQVDAWFLDGFAPAKNPDMWTAELFAELARLAAPGSTISTFTSTGWVRRLLNSAGFKMKRTPGIGHKWEVLRGEFLGWPEDAPAPARARPWFARPALGEKTALVIGGGLAGCASAASLAARGWQVQLLERHAELAREASGNPQGVLYLKLSAHGTALSQMILSGFGYTRRQLEHLQRGQDWDGCGVLQLAFNAKEAERQAQLAAAFPADLLHLLDQPQAQARAGIGLEHGGLFYPEGGWVHPPALCQWQASHPRIQVLAHREVLELRRVDEQWQAWDGDRMLASAAVVILAGAAEIKRFPASADLPLKRIRGQITRLPQTAQSQSLATVVCAEGYVAPARLGEHTLGASFDFKSQDLTPTSAEHAGNLEMLREISSDLLQRLGAEQLPLDSLQGRAAFRCTSPDYLPIVGPLADPLAFAETYAALGKDARQVPDLPCPWLDGLYINSGHGSRGLITAPLSGELLAAWLENEPLPLPRSVAEACHPNRFALRRLIRGKA.

The tract at residues 1–236 is tRNA (mnm(5)s(2)U34)-methyltransferase; sequence MIPELPHAQL…KWEVLRGEFL (236 aa). An FAD-dependent cmnm(5)s(2)U34 oxidoreductase region spans residues 265–658; the sequence is IGGGLAGCAS…ALRRLIRGKA (394 aa).

This sequence in the N-terminal section; belongs to the methyltransferase superfamily. tRNA (mnm(5)s(2)U34)-methyltransferase family. The protein in the C-terminal section; belongs to the DAO family. It depends on FAD as a cofactor.

It is found in the cytoplasm. The catalysed reaction is 5-aminomethyl-2-thiouridine(34) in tRNA + S-adenosyl-L-methionine = 5-methylaminomethyl-2-thiouridine(34) in tRNA + S-adenosyl-L-homocysteine + H(+). In terms of biological role, catalyzes the last two steps in the biosynthesis of 5-methylaminomethyl-2-thiouridine (mnm(5)s(2)U) at the wobble position (U34) in tRNA. Catalyzes the FAD-dependent demodification of cmnm(5)s(2)U34 to nm(5)s(2)U34, followed by the transfer of a methyl group from S-adenosyl-L-methionine to nm(5)s(2)U34, to form mnm(5)s(2)U34. The sequence is that of tRNA 5-methylaminomethyl-2-thiouridine biosynthesis bifunctional protein MnmC from Pseudomonas fluorescens (strain ATCC BAA-477 / NRRL B-23932 / Pf-5).